A 4717-amino-acid polypeptide reads, in one-letter code: Midasin (4717 aa).

6 AAA-ATPase protomer regions span residues 149–384 (LVQK…FGAF), 458–797 (EQLA…GLRR), 871–1131 (EHYI…QEVI), 1157–1448 (SLKE…NACE), 1552–1811 (VLRA…EVFD), and 1858–2106 (VLES…FLLK). ATP contacts are provided by residues 159-166 (GPEGIGKK) and 474-481 (GETGTGKT). Phosphoserine is present on S593. Residues 901-908 (GPTSSGKT), 1193-1200 (GDTGCGKT), 1566-1573 (GSPGVGKT), and 1876-1883 (GDTATGKT) each bind ATP. Positions 2173–3925 (KLLRKVLLTN…SGVGAEDITN (1753 aa)) are linker. Disordered stretches follow at residues 3898–3924 (PQEG…EDIT), 3936–4283 (LANE…LGDH), and 4295–4365 (EWED…EVGD). 2 stretches are compositionally biased toward acidic residues: residues 3936 to 3950 (LANE…DLDE) and 3973 to 3993 (ENSD…DIPE). Residues 4020–4030 (NEQSAANNESD) show a composition bias toward polar residues. Positions 4031–4049 (LVSKEDDNKALEDKDRQEK) are enriched in basic and acidic residues. The segment covering 4050 to 4066 (EDEEEMSDDVGIDDEIQ) has biased composition (acidic residues). Residues 4080-4103 (NEDHLDLPEDLKLDEKEGDVSKDS) are compositionally biased toward basic and acidic residues. Composition is skewed to acidic residues over residues 4104 to 4177 (DLED…ESTE), 4184 to 4196 (EELE…EDQA), and 4226 to 4236 (ENEELGEEDGA). Basic and acidic residues-rich tracts occupy residues 4258-4275 (QKGE…EADR) and 4329-4342 (AEKD…RDES). The span at 4343–4355 (ANQNPDSMNSTNI) shows a compositional bias: polar residues. The VWFA domain occupies 4505 to 4707 (QVMISIDDSK…ELPQLLSSAL (203 aa)).

This sequence belongs to the midasin family. In terms of assembly, associates with pre-60S ribosomes in the nucleoplasm.

It localises to the nucleus. The protein localises to the nucleolus. Its subcellular location is the nucleoplasm. Nuclear chaperone required for maturation and nuclear export of pre-60S ribosome subunits. Functions at successive maturation steps to remove ribosomal factors at critical transition points, first driving the exit of early pre-60S particles from the nucleolus and then driving late pre-60S particles from the nucleus. The chain is Midasin (mdn1) from Schizosaccharomyces pombe (strain 972 / ATCC 24843) (Fission yeast).